Here is a 91-residue protein sequence, read N- to C-terminus: Large ribosomal subunit protein bL31B (91 aa).

Belongs to the bacterial ribosomal protein bL31 family. Type B subfamily. In terms of assembly, part of the 50S ribosomal subunit.

The polypeptide is Large ribosomal subunit protein bL31B (Neisseria gonorrhoeae (strain NCCP11945)).